Here is a 475-residue protein sequence, read N- to C-terminus: Ribulose bisphosphate carboxylase large chain (475 aa).

Residues 1-2 (MS) constitute a propeptide that is removed on maturation. Pro3 carries the post-translational modification N-acetylproline. Lys14 carries the N6,N6,N6-trimethyllysine modification. Substrate is bound by residues Asn123 and Thr173. Lys175 (proton acceptor) is an active-site residue. Substrate is bound at residue Lys177. Mg(2+) contacts are provided by Lys201, Asp203, and Glu204. N6-carboxylysine is present on Lys201. The active-site Proton acceptor is the His294. Substrate is bound by residues Arg295, His327, and Ser379.

The protein belongs to the RuBisCO large chain family. Type I subfamily. In terms of assembly, heterohexadecamer of 8 large chains and 8 small chains; disulfide-linked. The disulfide link is formed within the large subunit homodimers. Mg(2+) is required as a cofactor. The disulfide bond which can form in the large chain dimeric partners within the hexadecamer appears to be associated with oxidative stress and protein turnover.

The protein localises to the plastid. It localises to the chloroplast. It carries out the reaction 2 (2R)-3-phosphoglycerate + 2 H(+) = D-ribulose 1,5-bisphosphate + CO2 + H2O. It catalyses the reaction D-ribulose 1,5-bisphosphate + O2 = 2-phosphoglycolate + (2R)-3-phosphoglycerate + 2 H(+). Its function is as follows. RuBisCO catalyzes two reactions: the carboxylation of D-ribulose 1,5-bisphosphate, the primary event in carbon dioxide fixation, as well as the oxidative fragmentation of the pentose substrate in the photorespiration process. Both reactions occur simultaneously and in competition at the same active site. The protein is Ribulose bisphosphate carboxylase large chain of Picea abies (Norway spruce).